The chain runs to 266 residues: Large ribosomal subunit protein uL4 (266 aa).

The protein belongs to the universal ribosomal protein uL4 family. Part of the 50S ribosomal subunit.

Its function is as follows. One of the primary rRNA binding proteins, this protein initially binds near the 5'-end of the 23S rRNA. It is important during the early stages of 50S assembly. It makes multiple contacts with different domains of the 23S rRNA in the assembled 50S subunit and ribosome. Functionally, forms part of the polypeptide exit tunnel. The polypeptide is Large ribosomal subunit protein uL4 (Sulfolobus acidocaldarius (strain ATCC 33909 / DSM 639 / JCM 8929 / NBRC 15157 / NCIMB 11770)).